The primary structure comprises 402 residues: Beta-peptidyl aminopeptidase BapA (402 aa).

The N-terminal stretch at Met-1–Ala-29 is a signal peptide. The active-site Nucleophile is Ser-279. Active-site proton donor/acceptor residues include Ser-317 and Glu-319.

The protein belongs to the peptidase S58 family. Heterooctamer of 4 heterodimers ((alpha:beta)4); each heterodimer is composed of an alpha subunit and a beta subunit processed from the same precursor. Autoproteolytic processing to generate the alpha and beta subunit is required for self-activation and is proposed to use a similar mechanism as substrate cleavage.

It is found in the periplasm. It catalyses the reaction Cleaves N-terminal beta-homoamino acids from peptides composed of 2 to 6 amino acids.. Its activity is regulated as follows. Inhibited by AEBSF (4-(2-aminoethyl)benzenesulfonyl fluoride, Pefabloc SC), ampicillin and AMP(hyd) (ampillicin-derived penicilloic acid). Functionally, beta-aminopeptidase that can cleave synthetic beta-peptides which consist of backbone-elongated beta-amino acid residues that are not processed by common proteolytic enzymes. Can cleave the beta-peptides beta-homoVal-beta-homoAla-beta-homoLeu and beta-homoAla-beta-homoLeu. Requires a beta-amino acid at the N-terminus of peptide substrates and cleaves the peptide bond between the N-terminal beta-amino acid and the amino acid at the second position of tripeptidic substrates of the general structure H-betahXaa-Ile-betahTyr-OH according to the following preferences with regard to the side chain of the N-terminal beta-amino acid: aliphatic and aromatic &gt; OH-containing &gt; hydrogen, basic and polar. The sequence is that of Beta-peptidyl aminopeptidase BapA from Sphingosinicella xenopeptidilytica.